The sequence spans 86 residues: Serine protease inhibitor Kazal-type 2 (86 aa).

The first 16 residues, 1–16, serve as a signal peptide directing secretion; it reads MLRLVLLLLVTDFAAS. Residues 32 to 86 form the Kazal-like domain; that stretch reads QFRTPDCGHFDFPACPRNLNPVCGTDMNTYSNECTLCMKIREDGSHINIIKDEPC. Disulfide bonds link Cys-38–Cys-68, Cys-46–Cys-65, and Cys-54–Cys-86.

As to expression, expressed in sperm (at protein level). Expressed in testis but not in ovary, brain, heart, kidney or lung. Within testis, expressed in epididymis and germ cells.

It localises to the secreted. The protein localises to the cytoplasmic vesicle. Its subcellular location is the secretory vesicle. The protein resides in the acrosome. Functionally, as a strong inhibitor of acrosin, it is required for normal spermiogenesis. It probably hinders premature activation of proacrosin and other proteases, thus preventing the cascade of events leading to spermiogenesis defects. May be involved in the regulation of serine protease-dependent germ cell apoptosis. It also inhibits trypsin. The protein is Serine protease inhibitor Kazal-type 2 (Spink2) of Mus musculus (Mouse).